A 289-amino-acid polypeptide reads, in one-letter code: Polyamine aminopropyltransferase (289 aa).

The 241-residue stretch at 5-245 folds into the PABS domain; sequence PGPIVLVEPL…YAVNYILGSL (241 aa). Residue Gln36 participates in S-methyl-5'-thioadenosine binding. Spermidine-binding residues include His67 and Glu91. S-methyl-5'-thioadenosine contacts are provided by residues Asp111 and 143 to 144; that span reads DG. Residue Asp164 is the Proton acceptor of the active site.

This sequence belongs to the spermidine/spermine synthase family. Homodimer or homotetramer.

The protein localises to the cytoplasm. It catalyses the reaction S-adenosyl 3-(methylsulfanyl)propylamine + putrescine = S-methyl-5'-thioadenosine + spermidine + H(+). Its pathway is amine and polyamine biosynthesis; spermidine biosynthesis; spermidine from putrescine: step 1/1. Its function is as follows. Catalyzes the irreversible transfer of a propylamine group from the amino donor S-adenosylmethioninamine (decarboxy-AdoMet) to putrescine (1,4-diaminobutane) to yield spermidine. This chain is Polyamine aminopropyltransferase, found in Pyrobaculum arsenaticum (strain DSM 13514 / JCM 11321 / PZ6).